The chain runs to 1885 residues: MAFSYRTPQEELLSRLPQSQQEAISGFQYERFQKEEEKKVENFSFYLPEKTREWFTKSGVYLSPFAYVNHSHPGCKTLENHLLFNVVASYISKYSYVACLSIKSNKMSKMERLGSNSVKTYDILNRLVTAKDKARYGPLARPERSPCPKKTNIFIHDEIHYWSRDQLETFLQVHRPKNLWATLVFPPEILAGYKSSVLPFLYQFEIHGKDLVYMPDGVRSESYTQPLENGFLLSSSSILVRNKATGVEIRYQVSLVYSLGSHHLFHIYPTEDLMKEEVRRFGPYDLFDVGSLFVKPVRVPIQDFPLSVFKKIFIYLSSLKKPDVQSAVAKLRQLSDADISIESVFMVQEFASRVEKNGVGSWSCSFWECMKDWFFDKLPYREVLEKIGLANDFTRRLMKIKPLAFDIHTTDRPLTVRMVIDQIWGERQSSCDDVPNIIFYGRKEWLEHGLLPKVKKGLAKLVPGRETGGSDYPEEIYSDLLSSTSIWRSYDENLRHRKASPIVILKSEKAYSEAPGFSSNCISLCSTPFGEVIERTPFEVERERKKRELSFGCLDFHIRKMKVKDASELSIKLDEQNKEGLRRQKRKEKAKKTRMIPVHLLELGSDQKEKNLGQEASKGKGIEQEERRKSDEAKFDSGPSGVCSIKAENPVDAQHIAEPVPCLKLNDLIGKEKICSSGLIKTVGNDYLTLARQIEDMPLAQLKNRKAAYFCIDYPMVYFHDKISYPTFEATGEIKQIIMRARDKWGANFNSALIQVYNDGCRLPLHSDNEECYDDDEILTINVVGDAKFHTTCHGEIIDLRQGDEILMPGGYQKMNKHAVEVASEGRTSVTLRVHKRDFSFESKLRFIKGKFDCLFVSIAEIIHKKPEEVMMFIPHIVDRCVSNRGCSLDDARAICEKYEIKIECEGDCGLVECGTIGLSVGRMLLRGNHFTVASVRRSSMDSLANSSKELKSNGVLDHVMFNFHKRLRSVEPDLTVEEIKVDSSRAGKLLKSLMDGMTGIVSHNSTHEGWRMIKGINSTSEMRSFMSMIKGKSEETRGDLFDRVQELNFMKVKIYGIFGFAGSGKSHAIQNLIQTEFKGSQGVMVICPRRFLAKDWSEKGVDEKDIKTFESALKSDVKGKRLFILDEISLLPKGFTDLLMLKMHMEGILKKSTIVCIGDPLQAGYFCPKDDNYLSREGEIKRLFKDGVNYKWYSYRINKFIAKKLAIETMNDFIGIDEQNLIYKDMPSAHHFMENKGNHIEVILVPSMIEKELYSNYGNVMTFGESQGLTFNCGVIVLSEEAKLCSDAHIMVAITRFRRGFCFALGSKGSKEDYMRSMKSGLLQRMCSGIGASKEFILGSSSVKLILSEKDVSKGAGVDEMDREARLEGDVWLKSMIYLGKRYHIVEPLGQVIKLTENAIKCHIPVCSSQTLGPELDNIQAREFREFKGKNGWSNQFREEAGPNWKHPYRVNQAMSYEAIYPRHRMDDDLTFLAAIKKRLRFDNVANNYAKFKAAESRGKYLAKVFLRHVPIKCGRDQRLLDQCRQEFEETKLSKSAATIGAHSQRSDSDWPLDKIFLFMKSQLCTKFEKRFTEAKAGQTLACFPHKILVEFSPWCRYTEKVLTANLPDNYYIHQRKNFSELEDFAKRFSNGSMCVESDYTAFDVSQDHTILAFEVELLKHFGWDDKVLQSYIKMKCTLGCRLGGFAIMRFTGEFSTFLFNTLANMVFTFCRYEVPDGTPICFAGDDMCALRNLREIDTHECILSKLSLKAKVNRTKVPMFCGWRLCFDGLIKEPCLIYERLQVAIENGRLMDVIDSYFLEFSFAYKLGERLYSHLEIEQLNYHQVLTRFFIRNKHLLRGDSRHNISELEWLSDEDSDDDKGSQIEDRRRGYSNCWGEKLQNLF.

The Alphavirus-like MT domain maps to 63–239 (SPFAYVNHSH…GFLLSSSSIL (177 aa)). The span at 607 to 635 (QKEKNLGQEASKGKGIEQEERRKSDEAKF) shows a compositional bias: basic and acidic residues. Positions 607–639 (QKEKNLGQEASKGKGIEQEERRKSDEAKFDSGP) are disordered. In terms of domain architecture, Fe2OG dioxygenase spans 748–836 (NFNSALIQVY…RTSVTLRVHK (89 aa)). The (+)RNA virus helicase ATP-binding domain maps to 1027–1192 (MSMIKGKSEE…RLFKDGVNYK (166 aa)). 1060–1067 (GFAGSGKS) is a binding site for ATP. Positions 1193–1337 (WYSYRINKFI…CSGIGASKEF (145 aa)) constitute a (+)RNA virus helicase C-terminal domain. The 108-residue stretch at 1634–1741 (SMCVESDYTA…LRNLREIDTH (108 aa)) folds into the RdRp catalytic domain.

The catalysed reaction is RNA(n) + a ribonucleoside 5'-triphosphate = RNA(n+1) + diphosphate. Involved in viral RNA replication. In Crataegus (hawthorn), this protein is RNA-directed RNA polymerase.